The following is a 135-amino-acid chain: L-ectoine synthase (135 aa).

It belongs to the ectoine synthase family.

It catalyses the reaction (2S)-4-acetamido-2-aminobutanoate = L-ectoine + H2O. It functions in the pathway amine and polyamine biosynthesis; ectoine biosynthesis; L-ectoine from L-aspartate 4-semialdehyde: step 3/3. Catalyzes the circularization of gamma-N-acetyl-alpha,gamma-diaminobutyric acid (ADABA) to ectoine (1,4,5,6-tetrahydro-2-methyl-4-pyrimidine carboxylic acid), which is an excellent osmoprotectant. The sequence is that of L-ectoine synthase from Hyphomonas neptunium (strain ATCC 15444).